Consider the following 803-residue polypeptide: Volume-regulated anion channel subunit LRRC8B (803 aa).

Residues 1 to 25 (MITLTELKCLADAQSSYHILKPWWD) are Cytoplasmic-facing. The helical transmembrane segment at 26–46 (VFWYYITLIMLLVAVLAGALQ) threads the bilayer. Residues 47–119 (LTQSRVLCCL…YEKQLHWFAK (73 aa)) lie on the Extracellular side of the membrane. Disulfide bonds link Cys55–Cys304 and Cys109–Cys289. The N-linked (GlcNAc...) asparagine glycan is linked to Asn78. A helical transmembrane segment spans residues 120–140 (FFPYLVLLHTLIFAACSNFWL). Topologically, residues 141-261 (HYPSTSSRLE…DIIYRVYLKQ (121 aa)) are cytoplasmic. Residues Ser186 and Ser196 each carry the phosphoserine modification. Residues 262–282 (IIVKVILFVLIITYVPYFLSY) traverse the membrane as a helical segment. Residues 283–307 (ITLEIDCSIDVQAFTGYKRYQCVYS) lie on the Extracellular side of the membrane. Residues 308 to 328 (LAEIFKVLASFYVILVMLYGL) form a helical membrane-spanning segment. The Cytoplasmic portion of the chain corresponds to 329–803 (TSSYSLWWML…ERLQTCLDKC (475 aa)). 15 LRR repeats span residues 415–439 (VKNS…VFEL), 440–462 (TEME…VAQL), 464–486 (NLRE…AFLE), 488–509 (NLRI…VFHL), 511–532 (NLKE…LHLE), 539–559 (NLRT…VTDL), 562–582 (SLQK…NNLK), 586–607 (NLKS…IFSL), 609–630 (NLHE…ISFQ), 634–655 (SLSC…IGAL), 657–678 (NLEQ…LFLC), 680–701 (KLHY…IQYL), 703–724 (NLQY…LFQC), 726–747 (KLQC…VGEL), and 749–771 (NLTH…EGCQ).

This sequence belongs to the LRRC8 family. As to quaternary structure, heterohexamer; oligomerizes with other LRRC8 proteins (LRRC8A, LRRC8C, LRRC8D and/or LRRC8E) to form a heterohexamer. In vivo, the subunit composition may depend primarily on expression levels, and heterooligomeric channels containing various proportions of the different LRRC8 proteins may coexist.

The protein resides in the cell membrane. It localises to the endoplasmic reticulum membrane. It catalyses the reaction chloride(in) = chloride(out). The catalysed reaction is iodide(out) = iodide(in). The enzyme catalyses taurine(out) = taurine(in). Functionally, non-essential component of the volume-regulated anion channel (VRAC, also named VSOAC channel), an anion channel required to maintain a constant cell volume in response to extracellular or intracellular osmotic changes. The VRAC channel conducts iodide better than chloride and can also conduct organic osmolytes like taurine. Channel activity requires LRRC8A plus at least one other family member (LRRC8B, LRRC8C, LRRC8D or LRRC8E); channel characteristics depend on the precise subunit composition. The protein is Volume-regulated anion channel subunit LRRC8B of Mus musculus (Mouse).